Consider the following 417-residue polypeptide: Calreticulin (417 aa).

The first 17 residues, 1–17 (MLLSVPLLLGLLGLAAA), serve as a signal peptide directing secretion. Residues 18 to 197 (EPAVYFKEQF…NSQVESGSLE (180 aa)) form an N-domain region. Glutamine 26 contributes to the Ca(2+) binding site. Lysine 48 is modified (N6-acetyllysine). Positions 62 and 64 each coordinate Ca(2+). Lysine 64 carries the N6-(2-hydroxyisobutyryl)lysine modification. A disulfide bond links cysteine 105 and cysteine 137. An alpha-D-glucoside-binding residues include tyrosine 109, lysine 111, tyrosine 128, and aspartate 135. Lysine 159 is modified (N6-acetyllysine). A 1-1 repeat occupies 191-202 (VESGSLEDDWDF). A 4 X approximate repeats region spans residues 191 to 255 (VESGSLEDDW…DAKKPEDWDE (65 aa)). The disordered stretch occupies residues 193-277 (SGSLEDDWDF…NPEYKGEWKP (85 aa)). The segment at 198–308 (DDWDFLPPKK…YSPDANIYAY (111 aa)) is P-domain. The segment covering 207-251 (KIKDPDAAKPEDWDERAKIDDPTDSKPEDWDKPEHIPDPDAKKPE) has biased composition (basic and acidic residues). An N6-acetyllysine modification is found at lysine 209. A run of 6 repeats spans residues 210–221 (DPDAAKPEDWDE), 227–238 (DPTDSKPEDWDK), 244–255 (DPDAKKPEDWDE), 259–269 (GEWEPPVIQNP), 273–283 (GEWKPRQIDNP), and 287–297 (GTWIHPEIDNP). Positions 237 to 270 (DKPEHIPDPDAKKPEDWDEEMDGEWEPPVIQNPE) are interaction with PPIB. A compositionally biased stretch (acidic residues) spans 252 to 261 (DWDEEMDGEW). The 3 X approximate repeats stretch occupies residues 259–297 (GEWEPPVIQNPEYKGEWKPRQIDNPDYKGTWIHPEIDNP). The C-domain stretch occupies residues 309-417 (DSFAVLGLDL…TTPGQTKDEL (109 aa)). Position 317 (aspartate 317) interacts with an alpha-D-glucoside. Ca(2+) is bound at residue aspartate 328. The tract at residues 350–417 (TKASEKQMKD…TTPGQTKDEL (68 aa)) is disordered. Over residues 352–379 (ASEKQMKDKQDEEQRLKEEEEDKKRKEE) the composition is skewed to basic and acidic residues. The segment covering 380–408 (EEAEDKEDEDDRDEDEEDEDEKEEDEEDT) has biased composition (acidic residues). The Prevents secretion from ER motif lies at 414–417 (KDEL).

It belongs to the calreticulin family. Monomer. Component of an EIF2 complex at least composed of CELF1/CUGBP1, CALR, CALR3, EIF2S1, EIF2S2, HSP90B1 and HSPA5. Interacts with PDIA3/ERp57 and SPACA9. Interacts with TRIM21. Interacts with NR3C1. Interacts with PPIB. Interacts (via P-domain) with PDIA5. Interacts with GABARAP. Interacts with CLCC1.

The protein localises to the endoplasmic reticulum lumen. It localises to the cytoplasm. It is found in the cytosol. Its subcellular location is the cytolytic granule. The protein resides in the secreted. The protein localises to the extracellular space. It localises to the extracellular matrix. It is found in the cell surface. Its subcellular location is the sarcoplasmic reticulum lumen. The protein resides in the cytoplasmic vesicle. The protein localises to the secretory vesicle. It localises to the cortical granule. In terms of biological role, calcium-binding chaperone that promotes folding, oligomeric assembly and quality control in the endoplasmic reticulum (ER) via the calreticulin/calnexin cycle. This lectin interacts transiently with almost all of the monoglucosylated glycoproteins that are synthesized in the ER. Interacts with the DNA-binding domain of NR3C1 and mediates its nuclear export. Involved in maternal gene expression regulation. May participate in oocyte maturation via the regulation of calcium homeostasis. Present in the cortical granules of non-activated oocytes, is exocytosed during the cortical reaction in response to oocyte activation and might participate in the block to polyspermy. The protein is Calreticulin (CALR) of Cricetulus griseus (Chinese hamster).